The following is a 692-amino-acid chain: Elongation factor G (692 aa).

Residues 8 to 282 enclose the tr-type G domain; that stretch reads ENTRNIGIMA…AVIDYLPSPL (275 aa). Residues 17–24, 81–85, and 135–138 contribute to the GTP site; these read AHIDAGKT, DTPGH, and NKMD.

Belongs to the TRAFAC class translation factor GTPase superfamily. Classic translation factor GTPase family. EF-G/EF-2 subfamily.

It is found in the cytoplasm. In terms of biological role, catalyzes the GTP-dependent ribosomal translocation step during translation elongation. During this step, the ribosome changes from the pre-translocational (PRE) to the post-translocational (POST) state as the newly formed A-site-bound peptidyl-tRNA and P-site-bound deacylated tRNA move to the P and E sites, respectively. Catalyzes the coordinated movement of the two tRNA molecules, the mRNA and conformational changes in the ribosome. The protein is Elongation factor G of Bacillus anthracis (strain CDC 684 / NRRL 3495).